Reading from the N-terminus, the 251-residue chain is UDP-N-acetylglucosamine--dolichyl-phosphate N-acetylglucosaminyltransferase (251 aa).

A helical membrane pass occupies residues 150-167 (VGNLGLSFITFLLGGYYV).

This sequence belongs to the glycosyltransferase 2 family.

It localises to the cell membrane. The catalysed reaction is a di-trans,poly-cis-dolichyl phosphate + UDP-N-acetyl-alpha-D-glucosamine = an N-acetyl-alpha-D-glucosaminyl-phospho-di-trans,poly-cis-dolichol + UDP. It functions in the pathway cell surface structure biogenesis; S-layer biogenesis. Its pathway is protein modification; protein glycosylation. In terms of biological role, involved in the assembly of an N-linked disaccharide that decorates the S-layer glycoprotein and flagellins. AglK initiates N-linked glycosylation through the formation of alpha-linked dolichyl monophosphate N-acetylglucosamine. It catalyzes the transfer of GlcNAc from the donor substrate UDP-GlcNAc to dolichyl phosphate C55 (Dol-P) to yield Dol-P-GlcNAc. AglK reaction proceeds with retention of stereochemistry. The reaction is specific for UDP-GlcNAc. AglK shows a stronger preference for short dolichol (C55-60 Dol-P) substrates compared with the longer (C85-105 Dol-P). The chain is UDP-N-acetylglucosamine--dolichyl-phosphate N-acetylglucosaminyltransferase from Methanococcus voltae.